The following is a 928-amino-acid chain: Autophagy-related protein 9 (928 aa).

Topologically, residues 1–295 (MEQSGHEPGK…NGFHCIILQK (295 aa)) are cytoplasmic. 2 disordered regions span residues 28-118 (SIHT…PFGS) and 188-216 (NDVK…SSSN). Positions 77 to 86 (LESDTSEEDE) are enriched in acidic residues. Over residues 90-99 (GINSDSQVID) the composition is skewed to polar residues. Low complexity predominate over residues 201–216 (SHNYNPTSTYTNSSSN). A helical membrane pass occupies residues 296–316 (VLNILTLLFVVFVSSFMGYCV). Residues 317–345 (DYSKLPTSTRFSEIKIDHCYSQNITGFTK) are Lumenal-facing. N-linked (GlcNAc...) asparagine glycosylation occurs at Asn339. The chain crosses the membrane as a helical span at residues 346–366 (FLLFLFYGFVILKVIQLYFDI). At 367-507 (NNIREMKLFY…NELRKRFMLA (141 aa)) the chain is on the cytoplasmic side. The stretch at 508–528 (GFLNIILSPFLVSYFVLLYFF) is an intramembrane region. Residues 529–588 (RYFNEYKTSPENIGARQYTPMAEWKFREYNELYHIFRKRIGLSNPLASKYVDQFPKEKTN) are Cytoplasmic-facing. The helical transmembrane segment at 589 to 609 (ILLKFVSFISGSFVAILAILA) threads the bilayer. Residues 610 to 625 (LWDPENFLNFEVTHDK) lie on the Lumenal side of the membrane. Residues 626 to 646 (TVLFYITVLGAIWSISQGSVS) form a helical membrane-spanning segment. At 647–692 (TEYHVFDPEETLRELAEYTHYLPDSWKDRYHTEGVKQEFCELYNLR) the chain is on the cytoplasmic side. An intramembrane segment occupies 693–713 (ITVLLRELASLITTPFILWFS). The Cytoplasmic portion of the chain corresponds to 714-928 (LPNSAGKMVD…EYYKKSDVGR (215 aa)). Residues 755–779 (FGTDGNETTEQDAATEEQDIDSEPD) are disordered. The span at 761 to 779 (ETTEQDAATEEQDIDSEPD) shows a compositional bias: acidic residues.

It belongs to the ATG9 family. As to quaternary structure, homotrimer; forms a homotrimer with a central pore that forms a path between the two membrane leaflets. Phosphorylated by ATG1. ATG1 phosphorylation is required for preautophagosome elongation.

It is found in the preautophagosomal structure membrane. Its subcellular location is the cytoplasmic vesicle membrane. The protein localises to the golgi apparatus membrane. The protein resides in the endoplasmic reticulum membrane. The enzyme catalyses a 1,2-diacyl-sn-glycero-3-phosphocholine(in) = a 1,2-diacyl-sn-glycero-3-phosphocholine(out). It catalyses the reaction a 1,2-diacyl-sn-glycero-3-phospho-L-serine(in) = a 1,2-diacyl-sn-glycero-3-phospho-L-serine(out). It carries out the reaction a 1,2-diacyl-sn-glycero-3-phosphoethanolamine(in) = a 1,2-diacyl-sn-glycero-3-phosphoethanolamine(out). The catalysed reaction is a 1,2-diacyl-sn-glycero-3-phospho-(1D-myo-inositol-3-phosphate)(in) = a 1,2-diacyl-sn-glycero-3-phospho-(1D-myo-inositol-3-phosphate)(out). Functionally, phospholipid scramblase involved in autophagy and cytoplasm to vacuole transport (Cvt) vesicle formation. Cycles between the preautophagosomal structure/phagophore assembly site (PAS) and the cytoplasmic vesicle pool and supplies membrane for the growing autophagosome. Lipid scramblase activity plays a key role in preautophagosomal structure/phagophore assembly by distributing the phospholipids that arrive through ATG2 from the cytoplasmic to the luminal leaflet of the bilayer, thereby driving autophagosomal membrane expansion. Required for mitophagy. Also involved in endoplasmic reticulum-specific autophagic process and is essential for the survival of cells subjected to severe ER stress. Different machineries are required for anterograde trafficking to the PAS during either the Cvt pathway or bulk autophagy and for retrograde trafficking. The sequence is that of Autophagy-related protein 9 (ATG9) from Candida glabrata (strain ATCC 2001 / BCRC 20586 / JCM 3761 / NBRC 0622 / NRRL Y-65 / CBS 138) (Yeast).